Consider the following 464-residue polypeptide: Glutamate--tRNA ligase 1 (464 aa).

Residues 8-18 (PSPTGHLHVGG) carry the 'HIGH' region motif. The 'KMSKS' region signature appears at 231 to 235 (PLSKR). Lysine 234 is an ATP binding site.

This sequence belongs to the class-I aminoacyl-tRNA synthetase family. Glutamate--tRNA ligase type 1 subfamily. In terms of assembly, monomer.

It is found in the cytoplasm. It carries out the reaction tRNA(Glu) + L-glutamate + ATP = L-glutamyl-tRNA(Glu) + AMP + diphosphate. Catalyzes the attachment of glutamate to tRNA(Glu) in a two-step reaction: glutamate is first activated by ATP to form Glu-AMP and then transferred to the acceptor end of tRNA(Glu). This Thermotoga petrophila (strain ATCC BAA-488 / DSM 13995 / JCM 10881 / RKU-1) protein is Glutamate--tRNA ligase 1.